Here is a 164-residue protein sequence, read N- to C-terminus: Lipoprotein signal peptidase (164 aa).

The next 3 helical transmembrane spans lie at 12-32 (WLWLVVVVLIIDLGSKYLILQ), 70-90 (WFFAGIAIGISVLLAVMMYRS), and 102-122 (ALIIGGALGNLFDRLWHGFVV). Residues D123 and D141 contribute to the active site. Residues 137–157 (FNLADTAICVGAALIVLEGFL) form a helical membrane-spanning segment.

Belongs to the peptidase A8 family.

The protein resides in the cell inner membrane. It carries out the reaction Release of signal peptides from bacterial membrane prolipoproteins. Hydrolyzes -Xaa-Yaa-Zaa-|-(S,diacylglyceryl)Cys-, in which Xaa is hydrophobic (preferably Leu), and Yaa (Ala or Ser) and Zaa (Gly or Ala) have small, neutral side chains.. The protein operates within protein modification; lipoprotein biosynthesis (signal peptide cleavage). This protein specifically catalyzes the removal of signal peptides from prolipoproteins. In Shigella flexneri, this protein is Lipoprotein signal peptidase.